The chain runs to 547 residues: T-complex protein 1 subunit gamma (547 aa).

Glycine 41 provides a ligand contact to ADP. Glycine 41 is a binding site for ATP. A Mg(2+)-binding site is contributed by aspartate 92. 6 residues coordinate ADP: glycine 93, threonine 94, threonine 95, serine 96, threonine 161, and lysine 162. Positions 93, 94, and 95 each coordinate ATP. Residues cysteine 365 and cysteine 371 are joined by a disulfide bond. 5 residues coordinate ADP: glycine 410, glycine 481, glutamate 482, glutamate 496, and lysine 501. Glycine 410 and glycine 481 together coordinate ATP. Glutamate 496 serves as a coordination point for ATP. Positions 525-534 are enriched in basic and acidic residues; the sequence is HKKKGEDHGR. The segment at 525–547 is disordered; the sequence is HKKKGEDHGRQPAAAPEAPQQAE. The span at 535–547 shows a compositional bias: low complexity; that stretch reads QPAAAPEAPQQAE.

The protein belongs to the TCP-1 chaperonin family. Component of the chaperonin-containing T-complex (TRiC), a hexadecamer composed of two identical back-to-back stacked rings enclosing a protein folding chamber. Each ring is made up of eight different subunits: TCP1/CCT1, CCT2, CCT3, CCT4, CCT5, CCT6A/CCT6, CCT7, CCT8.

Its subcellular location is the cytoplasm. It carries out the reaction ATP + H2O = ADP + phosphate + H(+). Functionally, component of the chaperonin-containing T-complex (TRiC), a molecular chaperone complex that assists the folding of actin, tubulin and other proteins upon ATP hydrolysis. The polypeptide is T-complex protein 1 subunit gamma (cct3) (Xenopus laevis (African clawed frog)).